Here is a 707-residue protein sequence, read N- to C-terminus: Tryptophan synthase (707 aa).

Residues 1-297 (MSEQLRQTFA…VKKEILDEFD (297 aa)) are tryptophan synthase alpha chain. Active-site proton acceptor residues include Glu-50 and Asp-61. The tract at residues 298 to 707 (ENHKHPIRFG…DLRFEEDPSA (410 aa)) is tryptophan synthase beta chain. Lys-384 carries the post-translational modification N6-(pyridoxal phosphate)lysine. Phosphoserine is present on residues Ser-540 and Ser-683.

The protein in the N-terminal section; belongs to the TrpA family. This sequence in the C-terminal section; belongs to the TrpB family. The cofactor is pyridoxal 5'-phosphate.

The catalysed reaction is (1S,2R)-1-C-(indol-3-yl)glycerol 3-phosphate + L-serine = D-glyceraldehyde 3-phosphate + L-tryptophan + H2O. It participates in amino-acid biosynthesis; L-tryptophan biosynthesis; L-tryptophan from chorismate: step 5/5. This is Tryptophan synthase (TRP5) from Saccharomyces cerevisiae (strain ATCC 204508 / S288c) (Baker's yeast).